Consider the following 208-residue polypeptide: FMN-dependent NADH:quinone oxidoreductase (208 aa).

Residues Ser-9, Ser-15 to Ser-17, Met-96 to Phe-99, and Thr-140 to Gly-143 contribute to the FMN site.

It belongs to the azoreductase type 1 family. Homodimer. The cofactor is FMN.

It catalyses the reaction 2 a quinone + NADH + H(+) = 2 a 1,4-benzosemiquinone + NAD(+). The catalysed reaction is N,N-dimethyl-1,4-phenylenediamine + anthranilate + 2 NAD(+) = 2-(4-dimethylaminophenyl)diazenylbenzoate + 2 NADH + 2 H(+). Quinone reductase that provides resistance to thiol-specific stress caused by electrophilic quinones. In terms of biological role, also exhibits azoreductase activity. Catalyzes the reductive cleavage of the azo bond in aromatic azo compounds to the corresponding amines. The protein is FMN-dependent NADH:quinone oxidoreductase of Ralstonia nicotianae (strain ATCC BAA-1114 / GMI1000) (Ralstonia solanacearum).